A 405-amino-acid polypeptide reads, in one-letter code: Acetate kinase (405 aa).

Asn-7 provides a ligand contact to Mg(2+). Position 14 (Lys-14) interacts with ATP. Arg-99 contacts substrate. Residue Asp-156 is the Proton donor/acceptor of the active site. Position 215–219 (215–219 (HLGNG)) interacts with ATP. Glu-391 contacts Mg(2+).

It belongs to the acetokinase family. As to quaternary structure, homodimer. Requires Mg(2+) as cofactor. The cofactor is Mn(2+).

The protein localises to the cytoplasm. The catalysed reaction is acetate + ATP = acetyl phosphate + ADP. It functions in the pathway metabolic intermediate biosynthesis; acetyl-CoA biosynthesis; acetyl-CoA from acetate: step 1/2. In terms of biological role, catalyzes the formation of acetyl phosphate from acetate and ATP. Can also catalyze the reverse reaction. This chain is Acetate kinase, found in Trichormus variabilis (strain ATCC 29413 / PCC 7937) (Anabaena variabilis).